We begin with the raw amino-acid sequence, 370 residues long: Probable pectin lyase E (370 aa).

Residues cysteine 75 and cysteine 96 are joined by a disulfide bond. Arginine 245 is an active-site residue. An N-linked (GlcNAc...) asparagine glycan is attached at asparagine 307. A disulfide bridge connects residues cysteine 311 and cysteine 319.

The protein belongs to the polysaccharide lyase 1 family.

The protein localises to the secreted. The catalysed reaction is Eliminative cleavage of (1-&gt;4)-alpha-D-galacturonan methyl ester to give oligosaccharides with 4-deoxy-6-O-methyl-alpha-D-galact-4-enuronosyl groups at their non-reducing ends.. Pectinolytic enzymes consist of four classes of enzymes: pectin lyase, polygalacturonase, pectin methylesterase and rhamnogalacturonase. Among pectinolytic enzymes, pectin lyase is the most important in depolymerization of pectin, since it cleaves internal glycosidic bonds of highly methylated pectins. This chain is Probable pectin lyase E (pelE), found in Aspergillus niger.